Here is a 120-residue protein sequence, read N- to C-terminus: FK506-binding protein 1B (120 aa).

The tract at residues 1-24 (MNPPQGVTKTILRPGNGRDSPHTG) is disordered. Positions 24 to 120 (GDTVIIDYTG…LVLYVCSPAG (97 aa)) constitute a PPIase FKBP-type domain.

The protein belongs to the FKBP-type PPIase family. FKBP1 subfamily.

The enzyme catalyses [protein]-peptidylproline (omega=180) = [protein]-peptidylproline (omega=0). In terms of biological role, PPIases accelerate the folding of proteins. It catalyzes the cis-trans isomerization of proline imidic peptide bonds in oligopeptides. The polypeptide is FK506-binding protein 1B (FKBP3) (Emericella nidulans (strain FGSC A4 / ATCC 38163 / CBS 112.46 / NRRL 194 / M139) (Aspergillus nidulans)).